Reading from the N-terminus, the 492-residue chain is ATP synthase subunit beta, chloroplastic (492 aa).

170–177 provides a ligand contact to ATP; sequence GGAGVGKT.

The protein belongs to the ATPase alpha/beta chains family. In terms of assembly, F-type ATPases have 2 components, CF(1) - the catalytic core - and CF(0) - the membrane proton channel. CF(1) has five subunits: alpha(3), beta(3), gamma(1), delta(1), epsilon(1). CF(0) has four main subunits: a(1), b(1), b'(1) and c(9-12).

Its subcellular location is the plastid. It localises to the chloroplast thylakoid membrane. It catalyses the reaction ATP + H2O + 4 H(+)(in) = ADP + phosphate + 5 H(+)(out). Produces ATP from ADP in the presence of a proton gradient across the membrane. The catalytic sites are hosted primarily by the beta subunits. In Angiopteris lygodiifolia (Turnip fern), this protein is ATP synthase subunit beta, chloroplastic.